The primary structure comprises 995 residues: Translation initiation factor IF-2 (995 aa).

Residues 53–399 (NNAGSPAPAA…SGAPRGQGQV (347 aa)) are disordered. 2 stretches are compositionally biased toward pro residues: residues 60–87 (PAAP…PPGG) and 104–119 (TPGP…PPQS). The span at 135-160 (AAAEARAAALKAEQEAAVKAAQAARQ) shows a compositional bias: low complexity. The segment covering 161 to 171 (QQRENVRREPP) has biased composition (basic and acidic residues). Positions 177–192 (RPGPRPGPGTMPPRPG) are enriched in pro residues. The span at 193–202 (SPAAGRSGAP) shows a compositional bias: low complexity. 2 stretches are compositionally biased toward pro residues: residues 203–213 (APGPGPRPGGR) and 242–264 (RPSP…PSPA). Positions 273 to 363 (RPGGPGSGRP…GAAGAFGRPG (91 aa)) are enriched in gly residues. Over residues 367-376 (TRGRKSKKQR) the composition is skewed to basic residues. In terms of domain architecture, tr-type G spans 486 to 658 (SRPPVVTVMG…VLLTADASLE (173 aa)). The G1 stretch occupies residues 495–502 (GHVDHGKT). 495–502 (GHVDHGKT) provides a ligand contact to GTP. The interval 520-524 (GITQH) is G2. The G3 stretch occupies residues 545-548 (DTPG). GTP is bound by residues 545–549 (DTPGH) and 599–602 (NKID). Positions 599–602 (NKID) are G4. Residues 635-637 (AAK) form a G5 region.

The protein belongs to the TRAFAC class translation factor GTPase superfamily. Classic translation factor GTPase family. IF-2 subfamily.

Its subcellular location is the cytoplasm. One of the essential components for the initiation of protein synthesis. Protects formylmethionyl-tRNA from spontaneous hydrolysis and promotes its binding to the 30S ribosomal subunits. Also involved in the hydrolysis of GTP during the formation of the 70S ribosomal complex. The chain is Translation initiation factor IF-2 from Salinispora arenicola (strain CNS-205).